The sequence spans 553 residues: Solute carrier family 45 member 3 (553 aa).

11 consecutive transmembrane segments (helical) span residues 19–39 (LLVN…ITYV), 52–72 (FMTM…PLLG), 88–108 (FIWA…RAGW), 120–140 (LELA…QVCF), 161–181 (YSVY…LPAI), 198–218 (CLFG…LLVA), 275–295 (FVAE…YTDF), 323–343 (MGSL…LVMD), 353–373 (AVYL…CLSH), 382–402 (AALT…LASL), and 522–542 (AYMV…TQVV).

The protein belongs to the glycoside-pentoside-hexuronide (GPH) cation symporter transporter (TC 2.A.2) family. Prostate specific. Expressed in all prostatic glandular cells. Expressed both in normal and cancerous prostates.

It localises to the membrane. It carries out the reaction sucrose(out) + H(+)(out) = sucrose(in) + H(+)(in). Proton-associated sucrose transporter. May be able to transport also glucose and fructose. This is Solute carrier family 45 member 3 from Homo sapiens (Human).